The sequence spans 371 residues: Probable dual-specificity RNA methyltransferase RlmN (371 aa).

Residue E114 is the Proton acceptor of the active site. The 227-residue stretch at 120–346 (DGPRRSICVS…ESAGVNVNFR (227 aa)) folds into the Radical SAM core domain. A disulfide bridge links C127 with C357. Positions 134, 138, and 141 each coordinate [4Fe-4S] cluster. S-adenosyl-L-methionine contacts are provided by residues 183 to 184 (GE), S215, 238 to 240 (SLH), and N314. C357 acts as the S-methylcysteine intermediate in catalysis.

This sequence belongs to the radical SAM superfamily. RlmN family. The cofactor is [4Fe-4S] cluster.

It localises to the cytoplasm. It catalyses the reaction adenosine(2503) in 23S rRNA + 2 reduced [2Fe-2S]-[ferredoxin] + 2 S-adenosyl-L-methionine = 2-methyladenosine(2503) in 23S rRNA + 5'-deoxyadenosine + L-methionine + 2 oxidized [2Fe-2S]-[ferredoxin] + S-adenosyl-L-homocysteine. The catalysed reaction is adenosine(37) in tRNA + 2 reduced [2Fe-2S]-[ferredoxin] + 2 S-adenosyl-L-methionine = 2-methyladenosine(37) in tRNA + 5'-deoxyadenosine + L-methionine + 2 oxidized [2Fe-2S]-[ferredoxin] + S-adenosyl-L-homocysteine. Functionally, specifically methylates position 2 of adenine 2503 in 23S rRNA and position 2 of adenine 37 in tRNAs. This is Probable dual-specificity RNA methyltransferase RlmN from Rhodopirellula baltica (strain DSM 10527 / NCIMB 13988 / SH1).